We begin with the raw amino-acid sequence, 189 residues long: ATP-dependent protease subunit HslV (189 aa).

Residue Thr12 is part of the active site. Na(+) contacts are provided by Ala172, Cys175, and Thr178.

The protein belongs to the peptidase T1B family. HslV subfamily. In terms of assembly, a double ring-shaped homohexamer of HslV is capped on each side by a ring-shaped HslU homohexamer. The assembly of the HslU/HslV complex is dependent on binding of ATP.

Its subcellular location is the cytoplasm. The catalysed reaction is ATP-dependent cleavage of peptide bonds with broad specificity.. Allosterically activated by HslU binding. Its function is as follows. Protease subunit of a proteasome-like degradation complex believed to be a general protein degrading machinery. The protein is ATP-dependent protease subunit HslV of Ehrlichia ruminantium (strain Welgevonden).